A 217-amino-acid chain; its full sequence is MAERRIPLKHEYAQDGKVIYGVDEAGRGPLAGPVYAACVVLDPADVIEGLADSKQLSEKKRISLADQIKQRARAWAIASASVEEIDRLNILQASLLAMQRAVVSLRPISNALVLVDGNHAPRLDCEVQTVIRGDSLVAEISAASILAKTARDIEMLRLHEAYPVYGFDRHKGYPTKAHLEAIRLHGITDIHRRSFAPCVGQSVSGARTTSFINQKEA.

The RNase H type-2 domain maps to 17–207 (KVIYGVDEAG…CVGQSVSGAR (191 aa)). A divalent metal cation is bound by residues aspartate 23, glutamate 24, and aspartate 116.

The protein belongs to the RNase HII family. Mn(2+) is required as a cofactor. It depends on Mg(2+) as a cofactor.

The protein localises to the cytoplasm. The enzyme catalyses Endonucleolytic cleavage to 5'-phosphomonoester.. Its function is as follows. Endonuclease that specifically degrades the RNA of RNA-DNA hybrids. The chain is Ribonuclease HII from Nitrosomonas europaea (strain ATCC 19718 / CIP 103999 / KCTC 2705 / NBRC 14298).